Consider the following 519-residue polypeptide: Ribonuclease Y (519 aa).

Residues 3–23 (LMIFAYIAIGAVLGAGTGYLL) form a helical membrane-spanning segment. The KH domain maps to 209-272 (TVTAVTLPSE…QVAKMALERL (64 aa)). The region spanning 335 to 428 (VLQHSLEVSA…VQAADSISGA (94 aa)) is the HD domain.

It belongs to the RNase Y family.

It is found in the cell membrane. Its function is as follows. Endoribonuclease that initiates mRNA decay. In Nitratidesulfovibrio vulgaris (strain ATCC 29579 / DSM 644 / CCUG 34227 / NCIMB 8303 / VKM B-1760 / Hildenborough) (Desulfovibrio vulgaris), this protein is Ribonuclease Y.